The chain runs to 390 residues: Trehalose-phosphate phosphatase (390 aa).

D150 (nucleophile) is an active-site residue. D150, D152, and D333 together coordinate Mg(2+). Substrate is bound at residue 150-152 (DFD).

Belongs to the trehalose phosphatase family. Requires Mg(2+) as cofactor.

It catalyses the reaction alpha,alpha-trehalose 6-phosphate + H2O = alpha,alpha-trehalose + phosphate. Its pathway is glycan biosynthesis; trehalose biosynthesis. Functionally, removes the phosphate from trehalose 6-phosphate to produce free trehalose. The sequence is that of Trehalose-phosphate phosphatase (otsB) from Mycobacterium marinum (strain ATCC BAA-535 / M).